A 559-amino-acid polypeptide reads, in one-letter code: Tectonic-like complex member MKS1 (559 aa).

In terms of domain architecture, C2 B9-type spans 311–439 (LRLFVNGEVV…TVSTWRPVEL (129 aa)).

Part of the tectonic-like complex (also named B9 complex). Interacts with TMEM107. Interacts with TCTN3, AHI1, TCTN1, TCTN2, CC2D2A. Interacts with FLNA. Interacts with TMEM67. Interacts with B9D1 and B9D2.

The protein localises to the cytoplasm. It localises to the cytoskeleton. The protein resides in the cilium basal body. It is found in the microtubule organizing center. Its subcellular location is the centrosome. Component of the tectonic-like complex, a complex localized at the transition zone of primary cilia and acting as a barrier that prevents diffusion of transmembrane proteins between the cilia and plasma membranes. Involved in centrosome migration to the apical cell surface during early ciliogenesis. Required for ciliary structure and function, including a role in regulating length and appropriate number through modulating centrosome duplication. Required for cell branching morphology. The protein is Tectonic-like complex member MKS1 (MKS1) of Homo sapiens (Human).